Here is a 376-residue protein sequence, read N- to C-terminus: Homeobox protein extradenticle (376 aa).

A disordered region spans residues 16-35 (APQGYSLSGQDDGQNTGNEN). The span at 20–34 (YSLSGQDDGQNTGNE) shows a compositional bias: polar residues. Residues 38–237 (RKQKDIGEIL…VMILRSRFLD (200 aa)) form the PBC domain. The tract at residues 45 to 124 (EILQQIMSIS…EGVAGPEKGG (80 aa)) is PBC-A. Residues 127-237 (AAAASAAAAS…VMILRSRFLD (111 aa)) are PBC-B. A DNA-binding region (homeobox; TALE-type) is located at residues 238 to 300 (ARRKRRNFSK…NKRIRYKKNI (63 aa)). The span at 318 to 335 (ASPYSMAGPPSGTTTPMM) shows a compositional bias: low complexity. Residues 318–376 (ASPYSMAGPPSGTTTPMMSPAPPQDSMGYTMGSGGYDQQQPYDNSMGGYDPNLHQDLSP) are disordered.

Belongs to the TALE/PBX homeobox family. Interacts with Ubx and hth.

The protein resides in the nucleus. Transcription factor which acts with the selector homeodomain proteins altering the regulation of downstream target genes such as wingless (wg), teashirt (tsh) and decapentaplegic (dpp), thus affecting segmental identity. Delimits the eye field and prevent inappropriate eye development. Required for proper localization of chordotonal organs within the peripheral nervous system. The protein is Homeobox protein extradenticle of Drosophila pseudoobscura pseudoobscura (Fruit fly).